Here is a 297-residue protein sequence, read N- to C-terminus: Iron/alpha-ketoglutarate-dependent dioxygenase ausU (297 aa).

The Fe cation site is built by H130, D132, and H206.

The protein belongs to the PhyH family. As to quaternary structure, homodimer. Requires Fe cation as cofactor.

It participates in secondary metabolite biosynthesis; terpenoid biosynthesis. In terms of biological role, iron/alpha-ketoglutarate-dependent dioxygenase; part of the gene cluster that mediates the biosynthesis of calidodehydroaustin, a fungal meroterpenoid. The first step of the pathway is the synthesis of 3,5-dimethylorsellinic acid by the polyketide synthase ausA. 3,5-dimethylorsellinic acid is then prenylated by the polyprenyl transferase ausN. Further epoxidation by the FAD-dependent monooxygenase ausM and cyclization by the probable terpene cyclase ausL lead to the formation of protoaustinoid A. Protoaustinoid A is then oxidized to spiro-lactone preaustinoid A3 by the combined action of the FAD-binding monooxygenases ausB and ausC, and the dioxygenase ausE. Acid-catalyzed keto-rearrangement and ring contraction of the tetraketide portion of preaustinoid A3 by ausJ lead to the formation of preaustinoid A4. The aldo-keto reductase ausK, with the help of ausH, is involved in the next step by transforming preaustinoid A4 into isoaustinone which is in turn hydroxylated by the P450 monooxygenase ausI to form austinolide. The cytochrome P450 monooxygenase ausG modifies austinolide to austinol. Austinol is further acetylated to austin by the O-acetyltransferase ausP, which spontaneously changes to dehydroaustin. The cytochrome P450 monooxygenase ausR then converts dehydroaustin is into 7-dehydrodehydroaustin. The hydroxylation catalyzed by ausR permits the O-acetyltransferase ausQ to add an additional acetyl group to the molecule, leading to the formation of acetoxydehydroaustin. The short chain dehydrogenase ausT catalyzes the reduction of the double bond present between carbon atoms 1 and 2 to convert 7-dehydrodehydroaustin into 1,2-dihydro-7-hydroxydehydroaustin. AusQ catalyzes not only an acetylation reaction but also the addition of the PKS ausV diketide product to 1,2-dihydro-7-hydroxydehydroaustin, forming precalidodehydroaustin. Finally, the iron/alpha-ketoglutarate-dependent dioxygenase converts precalidodehydroaustin into calidodehydroaustin. The chain is Iron/alpha-ketoglutarate-dependent dioxygenase ausU from Aspergillus calidoustus.